A 256-amino-acid chain; its full sequence is Type III pantothenate kinase (256 aa).

6 to 13 lines the ATP pocket; the sequence is DAGNSRIK. Substrate-binding positions include Y90 and 97-100; that span reads GSDR. Catalysis depends on D99, which acts as the Proton acceptor. T123 contacts ATP. Position 187 (T187) interacts with substrate.

The protein belongs to the type III pantothenate kinase family. Homodimer. NH4(+) serves as cofactor. It depends on K(+) as a cofactor.

The protein localises to the cytoplasm. The catalysed reaction is (R)-pantothenate + ATP = (R)-4'-phosphopantothenate + ADP + H(+). Its pathway is cofactor biosynthesis; coenzyme A biosynthesis; CoA from (R)-pantothenate: step 1/5. Its function is as follows. Catalyzes the phosphorylation of pantothenate (Pan), the first step in CoA biosynthesis. The chain is Type III pantothenate kinase from Burkholderia mallei (strain NCTC 10247).